The primary structure comprises 406 residues: Exodeoxyribonuclease 7 large subunit (406 aa).

It belongs to the XseA family. Heterooligomer composed of large and small subunits.

It localises to the cytoplasm. It catalyses the reaction Exonucleolytic cleavage in either 5'- to 3'- or 3'- to 5'-direction to yield nucleoside 5'-phosphates.. In terms of biological role, bidirectionally degrades single-stranded DNA into large acid-insoluble oligonucleotides, which are then degraded further into small acid-soluble oligonucleotides. The protein is Exodeoxyribonuclease 7 large subunit of Thermobifida fusca (strain YX).